Consider the following 248-residue polypeptide: PF03932 family protein CutC (248 aa).

It belongs to the CutC family.

It localises to the cytoplasm. The polypeptide is PF03932 family protein CutC (Citrobacter koseri (strain ATCC BAA-895 / CDC 4225-83 / SGSC4696)).